Consider the following 153-residue polypeptide: SsrA-binding protein (153 aa).

This sequence belongs to the SmpB family.

The protein resides in the cytoplasm. In terms of biological role, required for rescue of stalled ribosomes mediated by trans-translation. Binds to transfer-messenger RNA (tmRNA), required for stable association of tmRNA with ribosomes. tmRNA and SmpB together mimic tRNA shape, replacing the anticodon stem-loop with SmpB. tmRNA is encoded by the ssrA gene; the 2 termini fold to resemble tRNA(Ala) and it encodes a 'tag peptide', a short internal open reading frame. During trans-translation Ala-aminoacylated tmRNA acts like a tRNA, entering the A-site of stalled ribosomes, displacing the stalled mRNA. The ribosome then switches to translate the ORF on the tmRNA; the nascent peptide is terminated with the 'tag peptide' encoded by the tmRNA and targeted for degradation. The ribosome is freed to recommence translation, which seems to be the essential function of trans-translation. The protein is SsrA-binding protein of Sulfurovum sp. (strain NBC37-1).